Consider the following 130-residue polypeptide: Protein ApaG (130 aa).

One can recognise an ApaG domain in the interval S3 to R127.

In Brucella abortus (strain S19), this protein is Protein ApaG.